Reading from the N-terminus, the 279-residue chain is Bis(5'-nucleosyl)-tetraphosphatase, symmetrical (279 aa).

This sequence belongs to the Ap4A hydrolase family.

It catalyses the reaction P(1),P(4)-bis(5'-adenosyl) tetraphosphate + H2O = 2 ADP + 2 H(+). Its function is as follows. Hydrolyzes diadenosine 5',5'''-P1,P4-tetraphosphate to yield ADP. The protein is Bis(5'-nucleosyl)-tetraphosphatase, symmetrical of Edwardsiella ictaluri (strain 93-146).